The sequence spans 241 residues: Uracil-DNA glycosylase (241 aa).

The active-site Proton acceptor is Asp71.

Belongs to the uracil-DNA glycosylase (UDG) superfamily. UNG family.

It is found in the cytoplasm. The enzyme catalyses Hydrolyzes single-stranded DNA or mismatched double-stranded DNA and polynucleotides, releasing free uracil.. In terms of biological role, excises uracil residues from the DNA which can arise as a result of misincorporation of dUMP residues by DNA polymerase or due to deamination of cytosine. The sequence is that of Uracil-DNA glycosylase from Xanthomonas campestris pv. campestris (strain 8004).